A 329-amino-acid polypeptide reads, in one-letter code: Cardiolipin synthase (CMP-forming) (329 aa).

The transit peptide at 1-34 directs the protein to the mitochondrion; that stretch reads MPPSVATHASLLLKAAAAAAHLHPKPFFSPRAAP. The segment at 27-55 is disordered; sequence FFSPRAAPPRIPSAPAPPAAGGSRYRPTT. A compositionally biased stretch (pro residues) spans 32-44; the sequence is AAPPRIPSAPAPP. Helical transmembrane passes span 134–154, 156–176, 194–214, 228–248, and 298–318; these read LLTL…LLIS, FYME…AAAV, FGAF…LVLL, PWLL…MSAV, and VTSG…SLVV. Residues 319-329 are Mitochondrial intermembrane-facing; the sequence is YMRKIWRILLK.

This sequence belongs to the CDP-alcohol phosphatidyltransferase class-I family. It depends on Mn(2+) as a cofactor.

It is found in the mitochondrion inner membrane. It carries out the reaction a CDP-1,2-diacyl-sn-glycerol + a 1,2-diacyl-sn-glycero-3-phospho-(1'-sn-glycerol) = a cardiolipin + CMP + H(+). In terms of biological role, catalyzes the synthesis of cardiolipin (CL) (diphosphatidylglycerol) by specifically transferring a phosphatidyl group from CDP-diacylglycerol to phosphatidylglycerol (PG). CL is a key phospholipid in mitochondrial membranes and plays important roles in maintaining the functional integrity and dynamics of mitochondria under both optimal and stress conditions. The chain is Cardiolipin synthase (CMP-forming) from Oryza sativa subsp. japonica (Rice).